The following is a 512-amino-acid chain: Probable DNA ligase (512 aa).

An ATP-binding site is contributed by Asp-217. Residue Lys-219 is the N6-AMP-lysine intermediate of the active site. ATP contacts are provided by Arg-224, Arg-239, Glu-268, Phe-306, Arg-377, and Lys-383.

It belongs to the ATP-dependent DNA ligase family. It depends on Mg(2+) as a cofactor.

It carries out the reaction ATP + (deoxyribonucleotide)n-3'-hydroxyl + 5'-phospho-(deoxyribonucleotide)m = (deoxyribonucleotide)n+m + AMP + diphosphate.. Its function is as follows. DNA ligase that seals nicks in double-stranded DNA during DNA replication, DNA recombination and DNA repair. This Beutenbergia cavernae (strain ATCC BAA-8 / DSM 12333 / CCUG 43141 / JCM 11478 / NBRC 16432 / NCIMB 13614 / HKI 0122) protein is Probable DNA ligase.